A 272-amino-acid chain; its full sequence is MVEYWTLDRFEIGRLLGRGKFGQVWLAREREKGFIVALKIIPIKEIQTVETARQIRREIEIHSNLKHPNILRMYGHFHDKDNIYLILEYAGKGEFFKFLSDRGGKFGEKETSLYIRQVMLALTYMKECNVIHRDIKPENLLLGSDNQLKIADFGWAVYNADKRRMTFCGTMEYLAPEMVNNDIHDSGIDLWCLGILTYEFLMGKTPFESKNRNMREAYKKINSLKYTIPETISSNASDFISRLLVLSPGDRMELTEALNHPFIVKHHGRSSD.

Residues 10–263 (FEIGRLLGRG…LTEALNHPFI (254 aa)) enclose the Protein kinase domain. ATP-binding positions include 16 to 24 (LGRGKFGQV) and Lys39. The Proton acceptor role is filled by Asp134.

It belongs to the protein kinase superfamily. Ser/Thr protein kinase family. Aurora subfamily.

The protein resides in the nucleus. The protein localises to the cytoplasm. It localises to the cytoskeleton. Its subcellular location is the spindle. It is found in the chromosome. The protein resides in the centromere. The protein localises to the kinetochore. It carries out the reaction L-seryl-[protein] + ATP = O-phospho-L-seryl-[protein] + ADP + H(+). The catalysed reaction is L-threonyl-[protein] + ATP = O-phospho-L-threonyl-[protein] + ADP + H(+). Functionally, component of the chromosomal passenger complex (CPC), a complex that acts as a key regulator of chromosome segregation and cytokinesis. Has a role in error-correction of aberrent kinetochore-microtubule attachments to ensure that sister kinetochores become bioriented and connect to opposite poles by promoting spindle assembly checkpoint signaling. The polypeptide is Aurora kinase (IPL1) (Encephalitozoon cuniculi (strain GB-M1) (Microsporidian parasite)).